Here is a 520-residue protein sequence, read N- to C-terminus: Ribonuclease Y (520 aa).

The helical transmembrane segment at 3-23 (IVIVVISILLALIVGIVVGYL) threads the bilayer. The span at 81–118 (RMEAQKQENRLMQKEENLDRKSETLDKRESSLESKEQS) shows a compositional bias: basic and acidic residues. The tract at residues 81–125 (RMEAQKQENRLMQKEENLDRKSETLDKRESSLESKEQSLTEQQQQ) is disordered. One can recognise a KH domain in the interval 210–273 (TVSVVNLPND…EIARMALEKL (64 aa)). An HD domain is found at 336-429 (GLKHSAEVAY…VAAADALSAA (94 aa)).

Belongs to the RNase Y family.

It localises to the cell membrane. Endoribonuclease that initiates mRNA decay. This chain is Ribonuclease Y, found in Oceanobacillus iheyensis (strain DSM 14371 / CIP 107618 / JCM 11309 / KCTC 3954 / HTE831).